Here is a 1488-residue protein sequence, read N- to C-terminus: Eukaryotic translation initiation factor 4G (1488 aa).

Disordered regions lie at residues 196 to 320 (VQHR…GQTS), 337 to 367 (DSEK…GKSE), and 415 to 707 (THQI…MTEA). Basic and acidic residues-rich tracts occupy residues 216–244 (VSEK…EKHP) and 274–299 (ADEK…RNDT). Composition is skewed to polar residues over residues 300–310 (KNLPQQPQSAS), 345–360 (SKVS…SSIS), 448–464 (SLAT…SFVT), and 473–495 (CTTS…TQTL). Over residues 496-520 (SASVDASDVSEVNSGTSSESTSQST) the composition is skewed to low complexity. Positions 555 to 566 (QVKHADGAKDES) are enriched in basic and acidic residues. The segment covering 627-646 (QEQSESVATSDGADSSSTVD) has biased composition (polar residues). Residues 651–671 (LPEESEREVMCEDDGKKKVEP) are compositionally biased toward basic and acidic residues. The segment covering 683-696 (PKLQSSDSGNQASA) has biased composition (polar residues). The tract at residues 709 to 721 (GRKKYSRDFLLTF) is EIF4E-binding. The segment covering 753–784 (DREPHPSSARGSDRPTSRGDRRGPAMDDDKWL) has biased composition (basic and acidic residues). Disordered stretches follow at residues 753-795 (DREP…PNRD), 974-1000 (RGER…EREE), and 1107-1299 (WQQR…SEEE). One can recognise an MIF4G domain in the interval 883-1106 (QRQLKAILNK…RDSIDLRKNK (224 aa)). Residues 978 to 989 (EEAEADKTEEEG) are compositionally biased toward acidic residues. Composition is skewed to basic and acidic residues over residues 990-1000 (EIKQTKEEREE), 1111-1132 (RKVD…ERHA), 1181-1191 (IRYEQERHQFD), and 1254-1267 (TRED…DRFS). Over residues 1273–1294 (AAQSASSSHRPASQEGRSGNKS) the composition is skewed to polar residues. The 125-residue stretch at 1299–1423 (ELREKSIATI…VLQDVGKLIE (125 aa)) folds into the MI domain.

The protein belongs to the eukaryotic initiation factor 4G family. As to quaternary structure, EIF4F is a multi-subunit complex, the composition of which varies with external and internal environmental conditions. It is composed of at least EIF4A, EIF4E and EIF4G. In higher plants two isoforms of EIF4F have been identified, named isoform EIF4F and isoform EIF(iso)4F. Isoform EIF4F has subunits p220 and p26, whereas isoform EIF(iso)4F has subunits p82 and p28.

Component of the protein complex eIF4F, which is involved in the recognition of the mRNA cap, ATP-dependent unwinding of 5'-terminal secondary structure and recruitment of mRNA to the ribosome. This is Eukaryotic translation initiation factor 4G from Triticum aestivum (Wheat).